The following is a 571-amino-acid chain: Proline--tRNA ligase (571 aa).

The protein belongs to the class-II aminoacyl-tRNA synthetase family. ProS type 1 subfamily. As to quaternary structure, homodimer.

The protein localises to the cytoplasm. It catalyses the reaction tRNA(Pro) + L-proline + ATP = L-prolyl-tRNA(Pro) + AMP + diphosphate. Functionally, catalyzes the attachment of proline to tRNA(Pro) in a two-step reaction: proline is first activated by ATP to form Pro-AMP and then transferred to the acceptor end of tRNA(Pro). As ProRS can inadvertently accommodate and process non-cognate amino acids such as alanine and cysteine, to avoid such errors it has two additional distinct editing activities against alanine. One activity is designated as 'pretransfer' editing and involves the tRNA(Pro)-independent hydrolysis of activated Ala-AMP. The other activity is designated 'posttransfer' editing and involves deacylation of mischarged Ala-tRNA(Pro). The misacylated Cys-tRNA(Pro) is not edited by ProRS. The chain is Proline--tRNA ligase from Vibrio parahaemolyticus serotype O3:K6 (strain RIMD 2210633).